Reading from the N-terminus, the 626-residue chain is UvrABC system protein C (626 aa).

The 78-residue stretch at Glu20–Ile97 folds into the GIY-YIG domain. One can recognise a UVR domain in the interval Arg207–Val242.

It belongs to the UvrC family. As to quaternary structure, interacts with UvrB in an incision complex.

It localises to the cytoplasm. The UvrABC repair system catalyzes the recognition and processing of DNA lesions. UvrC both incises the 5' and 3' sides of the lesion. The N-terminal half is responsible for the 3' incision and the C-terminal half is responsible for the 5' incision. This chain is UvrABC system protein C, found in Rickettsia typhi (strain ATCC VR-144 / Wilmington).